We begin with the raw amino-acid sequence, 332 residues long: CXADR-like membrane protein (332 aa).

Residues 1 to 19 form the signal peptide; sequence MHTLIRSFLGLWYVLGALA. 2 consecutive Ig-like C2-type domains span residues 20 to 123 and 130 to 220; these read QTEI…SFIT and PSEL…VDVT. Topologically, residues 20 to 231 are extracellular; it reads QTEIKLVADE…QSVSNTGILA (212 aa). 2 disulfide bridges follow: C35–C109 and C151–C204. N193 carries N-linked (GlcNAc...) asparagine glycosylation. A helical transmembrane segment spans residues 232 to 252; it reads GVACGVVVGVFLIFFTVWLLF. Topologically, residues 253-332 are cytoplasmic; that stretch reads HKKEFKKREE…EQRHHCLEKI (80 aa). Positions 276–332 are disordered; that stretch reads PKARLVKPGSSSSDSRSSQSGSSSTRSTTNSASRSQRTHSTQETPHGEQRHHCLEKI. Residues 285–310 show a composition bias toward low complexity; sequence SSSSDSRSSQSGSSSTRSTTNSASRS. Over residues 320–332 the composition is skewed to basic and acidic residues; that stretch reads PHGEQRHHCLEKI.

Its subcellular location is the cell junction. It is found in the tight junction. The protein localises to the cell membrane. The sequence is that of CXADR-like membrane protein (clmp) from Xenopus tropicalis (Western clawed frog).